Here is a 428-residue protein sequence, read N- to C-terminus: Cyclic AMP-responsive element-binding protein 3-like protein 3-B (428 aa).

Topologically, residues 1–286 (MDHYSDQGGD…VMNGSNKPVQ (286 aa)) are cytoplasmic. Residues 67-83 (VSGSPVWSPSPSDSGIS) show a composition bias toward low complexity. The interval 67 to 104 (VSGSPVWSPSPSDSGISEDPHSDHIDSPPPNASPPMEP) is disordered. The segment covering 93–103 (SPPPNASPPME) has biased composition (pro residues). Residues 210–273 (ILKKIRRKIR…ISLMEQLRRL (64 aa)) form the bZIP domain. The basic motif stretch occupies residues 212 to 241 (KKIRRKIRNKQSAQESRKKKKEYIDGLESR). The leucine-zipper stretch occupies residues 252 to 273 (LQRKVFQLEKCNISLMEQLRRL). Residues 287-303 (AGTCVLVLLLSFTLILL) form a helical; Signal-anchor for type II membrane protein membrane-spanning segment. Over 304-428 (PNLKPFTDTK…SRRSPHADDM (125 aa)) the chain is Lumenal. Residues 381 to 428 (TEYDPESHNHSFDQHDEHHHGDPITGHVATVTLNPRRGSRRSPHADDM) are disordered. A compositionally biased stretch (basic and acidic residues) spans 385–402 (PESHNHSFDQHDEHHHGD). Residue Asn389 is glycosylated (N-linked (GlcNAc...) asparagine).

It belongs to the bZIP family. ATF subfamily. Binds DNA as a dimer. Controlled by regulated intramembrane proteolysis (RIP). A fragment containing the cytoplasmic transcription factor domain is released by proteolysis. The cleavage seems to be performed sequentially by site-1 and site-2 proteases.

The protein resides in the endoplasmic reticulum membrane. It localises to the nucleus. Transcriptional activator. Binds the cAMP response element (CRE). Activates transcription through box-B element and CRE. Seems to function synergistically with atf6. Regulates FGF21 transcription. The polypeptide is Cyclic AMP-responsive element-binding protein 3-like protein 3-B (creb3l3b) (Danio rerio (Zebrafish)).